A 106-amino-acid chain; its full sequence is Iron-sulfur cluster assembly protein CyaY (106 aa).

The protein belongs to the frataxin family.

Involved in iron-sulfur (Fe-S) cluster assembly. May act as a regulator of Fe-S biogenesis. The chain is Iron-sulfur cluster assembly protein CyaY from Shigella flexneri.